Here is a 273-residue protein sequence, read N- to C-terminus: Flagellin FljO (273 aa).

This sequence belongs to the bacterial flagellin family. In terms of assembly, in C.crescentus, the flagellar filament is composed of multiple flagellins of 29 kDa; 27 kDa and 25 kDa.

It localises to the secreted. The protein resides in the bacterial flagellum. Functionally, flagellin is the subunit protein which polymerizes to form the filaments of bacterial flagella. This chain is Flagellin FljO (fljO), found in Caulobacter vibrioides (strain ATCC 19089 / CIP 103742 / CB 15) (Caulobacter crescentus).